The sequence spans 245 residues: Protein mlo1 (245 aa).

The 35-residue stretch at 4-38 folds into the SAP domain; that stretch reads YKSLKVAELREKLAEKGLSTAGNKAELVSRLTAAT. The interval 32–245 is disordered; that stretch reads SRLTAATESN…AERFGVAAKN (214 aa). Residues 37–52 are compositionally biased toward low complexity; that stretch reads ATESNDENTSNNNATD. Acidic residues predominate over residues 58 to 70; that stretch reads PPEDDIDWGDMEN. The span at 109-118 shows a compositional bias: polar residues; it reads TSQAPETSTG. Basic and acidic residues predominate over residues 119–130; sequence AEEHQETTEESK. Position 139 is a phosphoserine (S139). The span at 182–196 shows a compositional bias: low complexity; it reads SSNNKNHNQSKNPQN.

Belongs to the SAP domain-containing ribonucleoprotein family.

This is Protein mlo1 (mlo1) from Schizosaccharomyces pombe (strain 972 / ATCC 24843) (Fission yeast).